The following is a 148-amino-acid chain: Endothelial differentiation-related factor 1 (148 aa).

Ala2 carries the N-acetylalanine modification. Residue Ser4 is modified to Phosphoserine. N6-methyllysine is present on Lys25. Residues 34 to 67 (RGEDVETSKKWAAGQNKQHSITKNTAKLDRETEE) are disordered. The tract at residues 37–113 (DVETSKKWAA…QVIADYESGR (77 aa)) is interaction with NR5A2, PPARG and NR1H3. Residues 48–58 (QNKQHSITKNT) are compositionally biased toward polar residues. The segment at 69–108 (HHDRVTLEVGKVIQRGRQSKGLTQKDLATKINEKPQVIAD) is interaction with TBP and NR5A1. The short motif at 81–88 (IQRGRQSK) is the IQ motif element. The 55-residue stretch at 81–135 (IQRGRQSKGLTQKDLATKINEKPQVIADYESGRAIPNNQVLGKIERAIGLKLRGK) folds into the HTH cro/C1-type domain. The segment at residues 92–111 (QKDLATKINEKPQVIADYES) is a DNA-binding region (H-T-H motif).

Interacts with TBP and the transcription factor IID (TFIID) complex, NR5A2, NR1H3 and PPARG. Interaction with TBP is regulated by phosphorylation. Binds NR5A1, ATF1, FOS and JUN via their conserved basic region. Binding to calmodulin is regulated by calcium and phosphorylation of the IQ motif. Phosphorylated. As to expression, expressed in brain, liver, kidney and heart (at protein level). Also expressed in testis.

It is found in the cytoplasm. It localises to the nucleus. Transcriptional coactivator stimulating NR5A1 and ligand-dependent NR1H3/LXRA and PPARG transcriptional activities. Enhances the DNA-binding activity of ATF1, ATF2, CREB1 and NR5A1. Regulates nitric oxid synthase activity probably by sequestering calmodulin in the cytoplasm. Might function in endothelial cells differentiation, hormone-induced cardiomyocytes hypertrophy and lipid metabolism. In Mus musculus (Mouse), this protein is Endothelial differentiation-related factor 1 (Edf1).